The chain runs to 369 residues: Geranylgeranyl pyrophosphate synthase, chloroplastic (369 aa).

Isopentenyl diphosphate is bound by residues Lys-118, Arg-121, and His-150. Mg(2+) contacts are provided by Asp-157 and Asp-163. Dimethylallyl diphosphate is bound at residue Arg-168. Arg-169 lines the isopentenyl diphosphate pocket. Lys-254, Thr-255, Gln-292, Lys-309, and Lys-319 together coordinate dimethylallyl diphosphate.

Belongs to the FPP/GGPP synthase family. Monomer. Requires Mg(2+) as cofactor.

It localises to the plastid. Its subcellular location is the chloroplast. It carries out the reaction isopentenyl diphosphate + dimethylallyl diphosphate = (2E)-geranyl diphosphate + diphosphate. It catalyses the reaction isopentenyl diphosphate + (2E)-geranyl diphosphate = (2E,6E)-farnesyl diphosphate + diphosphate. The catalysed reaction is isopentenyl diphosphate + (2E,6E)-farnesyl diphosphate = (2E,6E,10E)-geranylgeranyl diphosphate + diphosphate. Its pathway is isoprenoid biosynthesis; farnesyl diphosphate biosynthesis; farnesyl diphosphate from geranyl diphosphate and isopentenyl diphosphate: step 1/1. The protein operates within isoprenoid biosynthesis; geranyl diphosphate biosynthesis; geranyl diphosphate from dimethylallyl diphosphate and isopentenyl diphosphate: step 1/1. It participates in isoprenoid biosynthesis; geranylgeranyl diphosphate biosynthesis; geranylgeranyl diphosphate from farnesyl diphosphate and isopentenyl diphosphate: step 1/1. Functionally, catalyzes the trans-addition of the three molecules of IPP onto DMAPP to form geranylgeranyl pyrophosphate. In Capsicum annuum (Capsicum pepper), this protein is Geranylgeranyl pyrophosphate synthase, chloroplastic.